The sequence spans 459 residues: DNA polymerase subunit gamma-2 (459 aa).

In terms of assembly, heterotrimer composed of a catalytic subunit and a homodimer of accessory subunits (POLG:POLG2).

It localises to the mitochondrion. It is found in the mitochondrion matrix. Its subcellular location is the mitochondrion nucleoid. Accessory subunit of DNA polymerase gamma solely responsible for replication of mitochondrial DNA (mtDNA). Acts as an allosteric regulator of the holoenzyme activities. Enhances the polymerase activity and the processivity of POLG by increasing its interactions with the DNA template. Suppresses POLG exonucleolytic proofreading especially toward homopolymeric templates bearing mismatched termini. Binds to single-stranded DNA. This is DNA polymerase subunit gamma-2 (Polg2) from Mus musculus (Mouse).